Reading from the N-terminus, the 223-residue chain is Ubiquitin carboxyl-terminal hydrolase isozyme L1 (223 aa).

An N-acetylmethionine modification is found at Met-1. The 220-residue stretch at 2-221 (QLKPMEINPE…VRFSAVALCK (220 aa)) folds into the UCH catalytic domain. Positions 5-10 (PMEINP) are interaction with ubiquitin. Residue Cys-90 is the Nucleophile of the active site. Ser-125 is modified (phosphoserine). Catalysis depends on His-161, which acts as the Proton donor. An interaction with ubiquitin region spans residues 211–216 (EVRFSA). The S-farnesyl cysteine moiety is linked to residue Cys-220. A propeptide spans 221-223 (KAA) (removed in mature form).

It belongs to the peptidase C12 family. In terms of assembly, monomer. Homodimer. Interacts with SNCA. Interacts with COPS5. Post-translationally, O-glycosylated. In terms of tissue distribution, found in neuronal cell bodies and processes throughout the neocortex (at protein level). Expressed in neurons and cells of the diffuse neuroendocrine system and their tumors. Weakly expressed in ovary. Down-regulated in brains from Parkinson disease and Alzheimer disease patients.

The protein localises to the cytoplasm. It is found in the endoplasmic reticulum membrane. The enzyme catalyses Thiol-dependent hydrolysis of ester, thioester, amide, peptide and isopeptide bonds formed by the C-terminal Gly of ubiquitin (a 76-residue protein attached to proteins as an intracellular targeting signal).. Functionally, deubiquitinase that plays a role in the regulation of several processes such as maintenance of synaptic function, cardiac function, inflammatory response or osteoclastogenesis. Abrogates the ubiquitination of multiple proteins including WWTR1/TAZ, EGFR, HIF1A and beta-site amyloid precursor protein cleaving enzyme 1/BACE1. In addition, recognizes and hydrolyzes a peptide bond at the C-terminal glycine of ubiquitin to maintain a stable pool of monoubiquitin that is a key requirement for the ubiquitin-proteasome and the autophagy-lysosome pathways. Regulates amyloid precursor protein/APP processing by promoting BACE1 degradation resulting in decreased amyloid beta production. Plays a role in the immune response by regulating the ability of MHC I molecules to reach cross-presentation compartments competent for generating Ag-MHC I complexes. Mediates the 'Lys-48'-linked deubiquitination of the transcriptional coactivator WWTR1/TAZ leading to its stabilization and inhibition of osteoclastogenesis. Deubiquitinates and stabilizes epidermal growth factor receptor EGFR to prevent its degradation and to activate its downstream mediators. Modulates oxidative activity in skeletal muscle by regulating key mitochondrial oxidative proteins. Enhances the activity of hypoxia-inducible factor 1-alpha/HIF1A by abrogateing its VHL E3 ligase-mediated ubiquitination and consequently inhibiting its degradation. The chain is Ubiquitin carboxyl-terminal hydrolase isozyme L1 (UCHL1) from Homo sapiens (Human).